The following is a 317-amino-acid chain: MTKLLVAKVLCMVGVFFFMLLGSLLPVKVIEADLEKAHRSKKVLSLCNTFGGGVFLATCFNALLPAVRDKLQQVLSLGHISTDYPLAETLMMVGFFLTVFVEQLVLTFRRERPPFIDLETFNAGSDAGSDSEYESPFVGVGNRSHSLYPEPTAHTHGAGLRLRELGRPGPLRLLSLVFALSAHSVFEGLALGLQEEGERVVSLFVGVAIHETLVAVALGISMARSAVPLRDAAKLAVTVSAMIPVGIGLGLGIESARSVASSVASALLQGLAGGTFLFVTFLEILAKELEERSEQLLKVLFLVLGYAVLAGMVFLKW.

Topologically, residues 1–3 are extracellular; that stretch reads MTK. A helical membrane pass occupies residues 4-24; the sequence is LLVAKVLCMVGVFFFMLLGSL. The Cytoplasmic portion of the chain corresponds to 25–42; that stretch reads LPVKVIEADLEKAHRSKK. Residues 43 to 63 traverse the membrane as a helical segment; the sequence is VLSLCNTFGGGVFLATCFNAL. The Extracellular segment spans residues 64–85; sequence LPAVRDKLQQVLSLGHISTDYP. A helical transmembrane segment spans residues 86–106; that stretch reads LAETLMMVGFFLTVFVEQLVL. At 107–172 the chain is on the cytoplasmic side; it reads TFRRERPPFI…RELGRPGPLR (66 aa). A phosphoserine mark is found at Ser125 and Ser129. A helical transmembrane segment spans residues 173–193; that stretch reads LLSLVFALSAHSVFEGLALGL. The Extracellular segment spans residues 194-199; it reads QEEGER. Residues 200-220 form a helical membrane-spanning segment; that stretch reads VVSLFVGVAIHETLVAVALGI. Topologically, residues 221–232 are cytoplasmic; it reads SMARSAVPLRDA. Residues 233 to 253 traverse the membrane as a helical segment; it reads AKLAVTVSAMIPVGIGLGLGI. The Extracellular portion of the chain corresponds to 254-265; sequence ESARSVASSVAS. A helical transmembrane segment spans residues 266–286; the sequence is ALLQGLAGGTFLFVTFLEILA. Over 287 to 294 the chain is Cytoplasmic; sequence KELEERSE. Residues 295–315 form a helical membrane-spanning segment; that stretch reads QLLKVLFLVLGYAVLAGMVFL. The Extracellular segment spans residues 316 to 317; that stretch reads KW.

It belongs to the ZIP transporter (TC 2.A.5) family. In terms of tissue distribution, highly expressed in the testes. Highly expressed in dentate gyrus granule cells of the hippocampus. Expressed in the mammary gland.

It is found in the cell membrane. The protein resides in the apical cell membrane. The enzyme catalyses Zn(2+)(in) = Zn(2+)(out). In terms of biological role, transporter for the divalent cation Zn(2+). Mediates the influx of Zn(2+) into cells from extracellular space. Controls Zn(2+) accumulation into dentate gyrus granule cells in the hippocampus. Mediates Zn(2+) reuptake from the secreted milk within the alveolar lumen. The sequence is that of Zinc transporter ZIP3 (Slc39a3) from Mus musculus (Mouse).